Here is a 302-residue protein sequence, read N- to C-terminus: DNA-binding transcriptional activator HetR (302 aa).

Residue serine 153 is part of the active site.

It belongs to the peptidase S48 family. As to quaternary structure, homodimer; disulfide-linked.

Might be involved in temporal and/or spatial regulation of nitrogen fixation. Dimerization is required for DNA-binding. Has both a protease and a DNA-binding activity. This chain is DNA-binding transcriptional activator HetR, found in Trichodesmium erythraeum (strain IMS101).